The sequence spans 214 residues: N-(5'-phosphoribosyl)anthranilate isomerase (214 aa).

The protein belongs to the TrpF family.

The catalysed reaction is N-(5-phospho-beta-D-ribosyl)anthranilate = 1-(2-carboxyphenylamino)-1-deoxy-D-ribulose 5-phosphate. It participates in amino-acid biosynthesis; L-tryptophan biosynthesis; L-tryptophan from chorismate: step 3/5. The chain is N-(5'-phosphoribosyl)anthranilate isomerase from Rhodospirillum centenum (strain ATCC 51521 / SW).